The following is a 65-amino-acid chain: Large ribosomal subunit protein bL35 (65 aa).

The protein belongs to the bacterial ribosomal protein bL35 family.

The protein is Large ribosomal subunit protein bL35 of Borrelia turicatae (strain 91E135).